A 124-amino-acid chain; its full sequence is Small ribosomal subunit protein uS12 (124 aa).

At Asp89 the chain carries 3-methylthioaspartic acid.

The protein belongs to the universal ribosomal protein uS12 family. As to quaternary structure, part of the 30S ribosomal subunit. Contacts proteins S8 and S17. May interact with IF1 in the 30S initiation complex.

Functionally, with S4 and S5 plays an important role in translational accuracy. Its function is as follows. Interacts with and stabilizes bases of the 16S rRNA that are involved in tRNA selection in the A site and with the mRNA backbone. Located at the interface of the 30S and 50S subunits, it traverses the body of the 30S subunit contacting proteins on the other side and probably holding the rRNA structure together. The combined cluster of proteins S8, S12 and S17 appears to hold together the shoulder and platform of the 30S subunit. The sequence is that of Small ribosomal subunit protein uS12 from Aliivibrio salmonicida (strain LFI1238) (Vibrio salmonicida (strain LFI1238)).